Consider the following 683-residue polypeptide: Elongation factor G 2 (683 aa).

The region spanning 4-279 (QQMRNIGIMA…AVVEYLPAPQ (276 aa)) is the tr-type G domain. Residues 13 to 20 (AHVDAGKT), 77 to 81 (DTPGH), and 131 to 134 (NKMD) contribute to the GTP site.

Belongs to the TRAFAC class translation factor GTPase superfamily. Classic translation factor GTPase family. EF-G/EF-2 subfamily.

Its subcellular location is the cytoplasm. In terms of biological role, catalyzes the GTP-dependent ribosomal translocation step during translation elongation. During this step, the ribosome changes from the pre-translocational (PRE) to the post-translocational (POST) state as the newly formed A-site-bound peptidyl-tRNA and P-site-bound deacylated tRNA move to the P and E sites, respectively. Catalyzes the coordinated movement of the two tRNA molecules, the mRNA and conformational changes in the ribosome. This is Elongation factor G 2 (fusB) from Treponema pallidum (strain Nichols).